Consider the following 180-residue polypeptide: Cytochrome b6-f complex iron-sulfur subunit 2 (180 aa).

The chain crosses the membrane as a helical span at residues 21 to 43; that stretch reads LLTFGTITGVAAGALYPAVKYLI. One can recognise a Rieske domain in the interval 66–162; the sequence is VTEFLASHNA…ATVTDDDKLV (97 aa). Cys-108, His-110, Cys-126, and His-129 together coordinate [2Fe-2S] cluster. An intrachain disulfide couples Cys-113 to Cys-128.

Belongs to the Rieske iron-sulfur protein family. The 4 large subunits of the cytochrome b6-f complex are cytochrome b6, subunit IV (17 kDa polypeptide, PetD), cytochrome f and the Rieske protein, while the 4 small subunits are PetG, PetL, PetM and PetN. The complex functions as a dimer. [2Fe-2S] cluster is required as a cofactor.

It localises to the cellular thylakoid membrane. The enzyme catalyses 2 oxidized [plastocyanin] + a plastoquinol + 2 H(+)(in) = 2 reduced [plastocyanin] + a plastoquinone + 4 H(+)(out). Its function is as follows. Component of the cytochrome b6-f complex, which mediates electron transfer between photosystem II (PSII) and photosystem I (PSI), cyclic electron flow around PSI, and state transitions. In Synechocystis sp. (strain ATCC 27184 / PCC 6803 / Kazusa), this protein is Cytochrome b6-f complex iron-sulfur subunit 2.